The following is a 1486-amino-acid chain: Protein PRRC2B (1486 aa).

Disordered stretches follow at residues 1–20 (MSDR…KYST), 39–306 (VIPR…FPLP), 320–341 (QMND…PLRQ), 385–519 (KFSD…AREE), and 531–658 (LDQK…EQLY). Residues 88 to 137 (ANKQDQQDPKSSSVTASQPPESQPQPGLQKSVSNLQKPTQSISQENTNSV) show a composition bias toward polar residues. Phosphoserine occurs at positions 166, 168, 222, and 226. Positions 219–235 (SAASLSASPTELGSRNA) are enriched in polar residues. A Phosphothreonine modification is found at threonine 228. A Glycyl lysine isopeptide (Lys-Gly) (interchain with G-Cter in SUMO2) cross-link involves residue lysine 251. The segment covering 288–300 (SPQSSENQTTVER) has biased composition (polar residues). Phosphoserine occurs at positions 387 and 415. Composition is skewed to basic and acidic residues over residues 422 to 433 (TDAKRTQEEGKD), 478 to 488 (HSAEDKEDKPP), and 501 to 519 (AVER…AREE). Residue serine 479 is modified to Phosphoserine. A coiled-coil region spans residues 494 to 544 (IQSEMSEAVERARKRREEEERRAREERLAACAAKLKQLDQKCRQAQKANET). Serine 555 carries the phosphoserine modification. The span at 600–611 (SNSSSSSSSSSS) shows a compositional bias: low complexity. Serine 621 bears the Phosphoserine mark. Residues 638-656 (QRQQQQQQQQQQQQQQQEQ) show a composition bias toward low complexity. Lysine 751 participates in a covalent cross-link: Glycyl lysine isopeptide (Lys-Gly) (interchain with G-Cter in SUMO2). Phosphothreonine is present on threonine 753. Serine 762 and serine 793 each carry phosphoserine. 3 disordered regions span residues 792-847 (RSPD…EARK), 893-918 (EERR…IPPR), and 950-1080 (ALPV…PGAV). Residues 880–904 (IEVLTKKQRRLLEEERRKKEQAAQV) adopt a coiled-coil conformation. Residues 960 to 986 (SWRTAVTAFSSTEPGTSEQGFKSSQGD) show a composition bias toward polar residues. Low complexity predominate over residues 998 to 1007 (SSATSSQRSS). Composition is skewed to basic and acidic residues over residues 1025-1055 (SKAD…EHRP) and 1062-1074 (RSLK…EGAE). Phosphoserine is present on residues serine 1070 and serine 1159. Disordered regions lie at residues 1177 to 1205 (KAWE…SSVG), 1410 to 1443 (QSIQ…TSRE), and 1455 to 1486 (ADSK…AWEP). The span at 1181–1191 (NSPSLPEQSSP) shows a compositional bias: polar residues. Low complexity predominate over residues 1410–1421 (QSIQLPPGQSLS). Positions 1457–1474 (SKQNVPTGGSAPSPQAYR) are enriched in polar residues.

The polypeptide is Protein PRRC2B (Prrc2b) (Mus musculus (Mouse)).